We begin with the raw amino-acid sequence, 466 residues long: 3-isopropylmalate dehydratase large subunit (466 aa).

Positions 346, 406, and 409 each coordinate [4Fe-4S] cluster.

This sequence belongs to the aconitase/IPM isomerase family. LeuC type 1 subfamily. Heterodimer of LeuC and LeuD. [4Fe-4S] cluster is required as a cofactor.

The catalysed reaction is (2R,3S)-3-isopropylmalate = (2S)-2-isopropylmalate. It functions in the pathway amino-acid biosynthesis; L-leucine biosynthesis; L-leucine from 3-methyl-2-oxobutanoate: step 2/4. In terms of biological role, catalyzes the isomerization between 2-isopropylmalate and 3-isopropylmalate, via the formation of 2-isopropylmaleate. This chain is 3-isopropylmalate dehydratase large subunit, found in Alteromonas mediterranea (strain DSM 17117 / CIP 110805 / LMG 28347 / Deep ecotype).